The sequence spans 226 residues: Enolase-phosphatase E1 (226 aa).

This sequence belongs to the HAD-like hydrolase superfamily. MasA/MtnC family. Monomer. It depends on Mg(2+) as a cofactor.

The catalysed reaction is 5-methylsulfanyl-2,3-dioxopentyl phosphate + H2O = 1,2-dihydroxy-5-(methylsulfanyl)pent-1-en-3-one + phosphate. The protein operates within amino-acid biosynthesis; L-methionine biosynthesis via salvage pathway; L-methionine from S-methyl-5-thio-alpha-D-ribose 1-phosphate: step 3/6. Its pathway is amino-acid biosynthesis; L-methionine biosynthesis via salvage pathway; L-methionine from S-methyl-5-thio-alpha-D-ribose 1-phosphate: step 4/6. In terms of biological role, bifunctional enzyme that catalyzes the enolization of 2,3-diketo-5-methylthiopentyl-1-phosphate (DK-MTP-1-P) into the intermediate 2-hydroxy-3-keto-5-methylthiopentenyl-1-phosphate (HK-MTPenyl-1-P), which is then dephosphorylated to form the acireductone 1,2-dihydroxy-3-keto-5-methylthiopentene (DHK-MTPene). This chain is Enolase-phosphatase E1, found in Shewanella frigidimarina (strain NCIMB 400).